The chain runs to 74 residues: MEGDLAYIGAGLAGMGTGIAALGVGNVAANFLAGALRNPSAAASQTATLFIGIAFAEALGIFSFLVALLLMFAV.

2 helical membrane-spanning segments follow: residues 5–25 and 49–69; these read LAYI…LGVG and LFIG…VALL.

It belongs to the ATPase C chain family. F-type ATPases have 2 components, F(1) - the catalytic core - and F(0) - the membrane proton channel. F(1) has five subunits: alpha(3), beta(3), gamma(1), delta(1), epsilon(1). F(0) has three main subunits: a(1), b(2) and c(10-14). The alpha and beta chains form an alternating ring which encloses part of the gamma chain. F(1) is attached to F(0) by a central stalk formed by the gamma and epsilon chains, while a peripheral stalk is formed by the delta and b chains.

It is found in the cell inner membrane. Its function is as follows. F(1)F(0) ATP synthase produces ATP from ADP in the presence of a proton or sodium gradient. F-type ATPases consist of two structural domains, F(1) containing the extramembraneous catalytic core and F(0) containing the membrane proton channel, linked together by a central stalk and a peripheral stalk. During catalysis, ATP synthesis in the catalytic domain of F(1) is coupled via a rotary mechanism of the central stalk subunits to proton translocation. Key component of the F(0) channel; it plays a direct role in translocation across the membrane. A homomeric c-ring of between 10-14 subunits forms the central stalk rotor element with the F(1) delta and epsilon subunits. The polypeptide is ATP synthase subunit c (Ruegeria sp. (strain TM1040) (Silicibacter sp.)).